Here is a 465-residue protein sequence, read N- to C-terminus: Intraflagellar transport protein 54 (465 aa).

2 disordered regions span residues 119-301 (VRSN…GFTM) and 347-366 (LHGD…DKKP). Residues 144–207 (LEALAREKAE…KQKQQQQQQQ (64 aa)) are a coiled coil. The span at 146-198 (ALAREKAEKERQRREQEQQERERKERERQEKEREEREKHELESRERAEAEQWK) shows a compositional bias: basic and acidic residues. A compositionally biased stretch (low complexity) spans 199 to 220 (QKQQQQQQQQQSAISPQKSPPK). Residues 222–242 (RFADDDKTRVEEHQPVIERPH) are compositionally biased toward basic and acidic residues.

Belongs to the TRAF3IP1 family.

It localises to the cell projection. The protein resides in the cilium. Its subcellular location is the flagellum. It is found in the cytoplasm. The protein localises to the cytoskeleton. It localises to the flagellum axoneme. The protein resides in the flagellum basal body. Component of the intraflagellar transport complex B (IFT-B) involved in flagellar assembly. The polypeptide is Intraflagellar transport protein 54 (Giardia intestinalis (strain ATCC 50803 / WB clone C6) (Giardia lamblia)).